The sequence spans 264 residues: Thymidylate synthase (264 aa).

Residue arginine 21 coordinates dUMP. (6R)-5,10-methylene-5,6,7,8-tetrahydrofolate is bound at residue histidine 51. DUMP is bound at residue 126 to 127; that stretch reads RR. Catalysis depends on cysteine 146, which acts as the Nucleophile. Residues 166–169, asparagine 177, and 207–209 each bind dUMP; these read RSAD and HIY. Aspartate 169 lines the (6R)-5,10-methylene-5,6,7,8-tetrahydrofolate pocket. Position 263 (alanine 263) interacts with (6R)-5,10-methylene-5,6,7,8-tetrahydrofolate.

This sequence belongs to the thymidylate synthase family. Bacterial-type ThyA subfamily. As to quaternary structure, homodimer.

The protein resides in the cytoplasm. It catalyses the reaction dUMP + (6R)-5,10-methylene-5,6,7,8-tetrahydrofolate = 7,8-dihydrofolate + dTMP. The protein operates within pyrimidine metabolism; dTTP biosynthesis. Functionally, catalyzes the reductive methylation of 2'-deoxyuridine-5'-monophosphate (dUMP) to 2'-deoxythymidine-5'-monophosphate (dTMP) while utilizing 5,10-methylenetetrahydrofolate (mTHF) as the methyl donor and reductant in the reaction, yielding dihydrofolate (DHF) as a by-product. This enzymatic reaction provides an intracellular de novo source of dTMP, an essential precursor for DNA biosynthesis. The polypeptide is Thymidylate synthase (Agrobacterium fabrum (strain C58 / ATCC 33970) (Agrobacterium tumefaciens (strain C58))).